The following is a 98-amino-acid chain: Integration host factor subunit alpha (98 aa).

The disordered stretch occupies residues 49-70 (FGNFDLRDKNQRPGRNPKTGED).

This sequence belongs to the bacterial histone-like protein family. As to quaternary structure, heterodimer of an alpha and a beta chain.

Its function is as follows. This protein is one of the two subunits of integration host factor, a specific DNA-binding protein that functions in genetic recombination as well as in transcriptional and translational control. This chain is Integration host factor subunit alpha, found in Yersinia pestis.